The following is a 166-amino-acid chain: Small ribosomal subunit protein bS6 (166 aa).

The segment at 97–166 (EEGPSAMMRK…EEAETATDGE (70 aa)) is disordered. Positions 105 to 159 (RKADRDRERDDRGGGFRGEREGGFRGDREGGFRGGDRDGGGFRGDRGPRRPREEA) are enriched in basic and acidic residues.

This sequence belongs to the bacterial ribosomal protein bS6 family.

Functionally, binds together with bS18 to 16S ribosomal RNA. This Bradyrhizobium diazoefficiens (strain JCM 10833 / BCRC 13528 / IAM 13628 / NBRC 14792 / USDA 110) protein is Small ribosomal subunit protein bS6.